We begin with the raw amino-acid sequence, 512 residues long: MDGSGTGSRSGVESILPNYKLGRTLGIGSFGRVKIAEHALTGHKVAIKILNRRKIKNMEMEEKVRREIKILRLFMHPHIIRLYEVIETPTDIYLVMEYVNSGELFDYIVEKGRLQEDEARNFFQQIISGVEYCHRNMVVHRDLKPENLLLDSKCNVKIADFGLSNIMRDGHFLKTSCGSPNYAAPEVISGKLYAGPEVDVWSCGVILYALLCGTLPFDDENIPNLFKKIKGGIYTLPSHLSPGARDLIPRMLVVDPMKRVTIPEIRQHPWFQAHLPRYLAVPPPDTVQQAKKIDEEILQEVINMGFDRNHLIESLRNRTQNDGTVTYYLILDNRFRASSGYLGAEFQETMEGTPRMHPAESVASPVSHRLPGLMEYQGVGLRSQYPVERKWALGLQSRAHPREIMTEVLKALQDLNVCWKKIGHYNMKCRWVPNSSADGMLSNSMHDNNYFGDESSIIENEAAVKSPNVVKFEIQLYKTRDDKYLLDLQRVQGPQFLFLDLCAAFLAQLRVL.

Residues 19–271 (YKLGRTLGIG…IPEIRQHPWF (253 aa)) form the Protein kinase domain. Lysine 20 is covalently cross-linked (Glycyl lysine isopeptide (Lys-Gly) (interchain with G-Cter in ubiquitin)). 25–33 (LGIGSFGRV) lines the ATP pocket. A Glycyl lysine isopeptide (Lys-Gly) (interchain with G-Cter in SUMO) cross-link involves residue lysine 34. Lysine 48 provides a ligand contact to ATP. Residue lysine 63 forms a Glycyl lysine isopeptide (Lys-Gly) (interchain with G-Cter in SUMO) linkage. Aspartate 142 functions as the Proton acceptor in the catalytic mechanism. At serine 164 the chain carries Phosphoserine. At threonine 175 the chain carries Phosphothreonine; by GRIK1 or GRIK2. Residues 290-389 (AKKIDEEILQ…GLRSQYPVER (100 aa)) form an auto-inhibitory domain (AID) region. In terms of domain architecture, UBA spans 292-332 (KIDEEILQEVINMGFDRNHLIESLRNRTQNDGTVTYYLILD). Residues 294 to 512 (DEEILQEVIN…AAFLAQLRVL (219 aa)) are regulatory domain (RD). Serine 364 is subject to Phosphoserine. Residue lysine 390 forms a Glycyl lysine isopeptide (Lys-Gly) (interchain with G-Cter in SUMO) linkage. A PPI region spans residues 390–512 (KWALGLQSRA…AAFLAQLRVL (123 aa)). The region spanning 463–511 (AVKSPNVVKFEIQLYKTRDDKYLLDLQRVQGPQFLFLDLCAAFLAQLRV) is the KA1 domain.

Belongs to the protein kinase superfamily. CAMK Ser/Thr protein kinase family. SNF1 subfamily. In terms of assembly, subunit of a probable heterotrimeric complex consisting of an alpha catalytic (KIN10 or KIN11) subunit, and a beta (KINB) and a gamma (KING or SNF4) non-catalytic regulatory subunits. Interacts with KINB2, KINB3, SNF4 and probably with KINB1 and KING1. Interacts with SKP1/ASK1, PAD1, the N-terminus of PRL1 and the WD40 domain of 5PTase13. Potential subunit of a SCF ubiquitin ligase complex consisting of a SNF1-related protein kinase, SKP1 and CUL1. The association of the SCF complex with the proteasome may be mediated by PAD1 and seems to be inhibited by the interaction with PRL1. Interacts with ATAF1. Interacts with ESD4. Interacts with SCE1. Interacts with FUS3. Interacts with PP2C74. Interacts with CDKE1. Interacts with ABI1 and PP2CA. Interacts with KRP6. Interacts with CIPK14. Interacts with FLZ proteins through their FLZ-type zinc finger domains. Interacts with GEBP/STKR1. Interacts with MYC2. Interacts with IDD8. Interacts with BZIP63. Interacts with PTL. Interacts with FLZ3, FLZ9, TCP3, TCP13, HB21/ZHD3 and HB23/ZHD10. Interacts with PTP1. Interacts with RAPTOR1B. Forms oligomers in vitro under strongly reducing conditions. Interacts with WRI1. Interacts with EIN3. Component of a ternary complex composed of BZIP2-BZIP63 heterodimer and KIN10. Interacts with IPK2b. Interacts with FLZ6 and FLZ10. Phosphorylated at Thr-175 in response to glucose. Phosphorylated at Thr-175 under submergence. Autophosphorylated. Dephosphorylated at Thr-175 by ABI1 and PP2CA. Post-translationally, ubiquitinated. Degradation is mediated by a CUL4-based E3 ligase that uses PRL1 as a substrate receptor. In terms of processing, sumoylated by SIZ1. Sumoylated SnRK1 is ubiquitinated and degraded by the proteasome. Isoform 2 is widely expressed, especially in newly developing tissues. Isoform 2 is expressed throughout the seedling, with highest expression in leaf primordia and vascular tissue, and the seedling root tip. Isoform 2 is later expressed in developing lateral root primordia and developing embryos within siliques. Isoform 1 is widely expressed but at very low levels.

It is found in the plastid. The protein resides in the chloroplast. Its subcellular location is the cytoplasm. The protein localises to the nucleus. It localises to the golgi apparatus. It is found in the endoplasmic reticulum. The catalysed reaction is L-seryl-[protein] + ATP = O-phospho-L-seryl-[protein] + ADP + H(+). It carries out the reaction L-threonyl-[protein] + ATP = O-phospho-L-threonyl-[protein] + ADP + H(+). With respect to regulation, activated by phosphorylation at Thr-175 by GRIK1/SNAK2 and GRIK2/SNAK1. Inactivated by dephosphorylation at Thr-175. Inhibited by trehalose-6-phosphate. Down-regulated by SR45 by affecting its stability. Reduced kinase activity in response to H(2)O(2) treatment. The redox-state of Cys-177 seems to directly influence its kinase activity. Down-regulated by FLZ6 and FLZ10. In terms of biological role, catalytic subunit of the probable trimeric SNF1-related protein kinase (SnRK) complex, a central regulator of cellular energy homeostasis, which, in response to seemingly unrelated darkness, sugar and stress conditions, activates energy-producing pathways and inhibits energy-consuming processes. May play a role in a signal transduction cascade regulating gene expression and carbohydrate metabolism in higher plants. The SnRK complex may also be involved in the regulation of fatty acid synthesis by phosphorylation of acetyl-CoA carboxylase and in assimilation of nitrogen by phosphorylating nitrate reductase. In vitro, KIN10 exhibits kinase activity on sucrose phosphate synthase and the kinase activity is inhibited by PRL1. May be a subunit of a SCF ubiquitin ligase complex and thus be involved in proteasomal ubiquitination. Phosphorylates GRIK1/SNAK2 and GRIK2/SNAK1 in vitro. Cooperates with FUS3 to regulate developmental phase transitions and lateral organ development and act both as positive regulators of abscisic acid (ABA) signaling during germination. Phosphorylates FUS3 in embryo. Negatively modulates MYC2 accumulation through its protein phosphorylation. Phosphorylates geminivirus (CaLCuV, TGMV, ToMoV) AL2 protein resulting in a delay in the viral DNA accumulation and symptom appearance during infection. Regulates bZIP63 activity to alter metabolism in response to starvation through its protein phosphorylation. Under sugar deprivation conditions, antagonizes the IDD8 function in flowering time control by its protein phosphorylation. Plays a cardinal role in the control of cell proliferation through inhibition of KRP6 activity by its protein phosphorylation. Under submergence, phosphorylates PTP1, leading to the release of the MPK6 signaling pathway inhibition. Triggers its own SUMO-mediated proteasomal degradation, establishing a negative feedback loop that attenuates SnRK1 signaling and prevents detrimental hyperactivation of stress responses. Phosphorylates RAPTOR1B in vitro. Phosphorylates and down-regulates HMGR1S in vitro. Kinase activity is redox-sensitive. Acts upstream of TOR in the regulation of autophagy. Required for the activation of autophagy by many abiotic stresses. Involved in positive regulation of autophagy, possibly by affecting the phosphorylation of ATG1 proteins. Negatively modulates WRI1 accumulation through its protein phosphorylation. Modulates leaf senescence progression by the negative regulation of EIN3 accumulation through its protein phosphorylation. Under extended darkness, C/S1-bZIP-SnRK1 complex interacts with the histone acetylation machinery to remodel chromatin and facilitate transcription. BZIP2-BZIP63-KIN10 complex binds to the ETFQO promoter to up-regulate its transcription. Phosphorylates and down-regulates IPK2b in vitro. Involved in the regulation of sucrose-induced hypocotyl elongation under light/dark cycles. This is SNF1-related protein kinase catalytic subunit alpha KIN10 from Arabidopsis thaliana (Mouse-ear cress).